The following is a 261-amino-acid chain: MYLIETYFRLTALENNIESQSRLLNAVIDQWRYNGQIIGREIPLYLAEEDGAQGFAMRVICPEQDSLFPQNNNAEVNRALQEAEKCGVIFDGFQLVGDDFNSDQTAENASPAWQVLYTTHLQSCSPIHSGENFAPIPLYKQLKNQPHLTQDLIKWQENWQACDQLQMNGAVLEQQSLAEISDHQSTLSKHGRYLAQEIEKETGIPTYYYLYRVGGQSLKSEKSRCCPSCGANWALKDAIFDTFHFKCDTCRLVSNLSWNFL.

This is an uncharacterized protein from Haemophilus influenzae (strain ATCC 51907 / DSM 11121 / KW20 / Rd).